Reading from the N-terminus, the 317-residue chain is Ribosomal large subunit pseudouridine synthase D (317 aa).

Positions 15-89 (WRLDRALASL…IPLEIVFEDE (75 aa)) constitute an S4 RNA-binding domain. Aspartate 141 is a catalytic residue.

It belongs to the pseudouridine synthase RluA family.

It localises to the cytoplasm. The catalysed reaction is uridine(1911/1915/1917) in 23S rRNA = pseudouridine(1911/1915/1917) in 23S rRNA. In terms of biological role, responsible for synthesis of pseudouridine from uracil at positions 1911, 1915 and 1917 in 23S ribosomal RNA. The chain is Ribosomal large subunit pseudouridine synthase D from Zymomonas mobilis subsp. mobilis (strain ATCC 31821 / ZM4 / CP4).